We begin with the raw amino-acid sequence, 838 residues long: Urease (838 aa).

The Urease domain occupies 400 to 838; the sequence is GAIDCHVHFI…VPLSRNYFLF (439 aa). Residues His405, His407, and Lys488 each contribute to the Ni(2+) site. N6-carboxylysine is present on Lys488. His490 provides a ligand contact to substrate. The Ni(2+) site is built by His517 and His543. The active-site Proton donor is His591. Asp631 contributes to the Ni(2+) binding site.

This sequence in the C-terminal section; belongs to the metallo-dependent hydrolases superfamily. Urease alpha subunit family. As to quaternary structure, homohexamer. Other oligomeric forms may exist depending on pH and presence of salts. Ni(2+) is required as a cofactor. Carboxylation allows a single lysine to coordinate two nickel ions.

It carries out the reaction urea + 2 H2O + H(+) = hydrogencarbonate + 2 NH4(+). It functions in the pathway nitrogen metabolism; urea degradation; CO(2) and NH(3) from urea (urease route): step 1/1. With respect to regulation, requires the three urease accessory proteins URED, UREF AND UREG for its activation. Urea hydrolase involved in nitrogen recycling from ureide, purine, and arginine catabolism. In Arabidopsis thaliana (Mouse-ear cress), this protein is Urease.